The chain runs to 463 residues: Elongation factor 1-alpha 2 (463 aa).

Position 2 is a n,N,N-trimethylglycine (glycine 2). Residues 5 to 242 (KTHINIVVIG…DTILPPTRPT (238 aa)) form the tr-type G domain. The tract at residues 14–21 (GHVDSGKS) is G1. GTP is bound by residues aspartate 17, serine 18, glycine 19, lysine 20, serine 21, and threonine 22. Residue aspartate 17 coordinates Mg(2+). The residue at position 36 (lysine 36) is an N6,N6,N6-trimethyllysine; alternate. Lysine 36 carries the N6,N6-dimethyllysine; alternate modification. Residue lysine 36 is modified to N6-methyllysine; alternate. N6,N6,N6-trimethyllysine is present on lysine 55. Position 55 is an N6,N6-dimethyllysine (lysine 55). A G2 region spans residues 70–74 (GITID). Lysine 79 bears the N6,N6,N6-trimethyllysine mark. Positions 91–94 (DAPG) are G3. GTP is bound by residues asparagine 153, lysine 154, and aspartate 156. The interval 153–156 (NKMD) is G4. Position 163 is a phosphoserine (serine 163). An N6,N6-dimethyllysine; alternate modification is found at lysine 165. An N6-methyllysine; alternate modification is found at lysine 165. At lysine 165 the chain carries N6,N6,N6-trimethyllysine; alternate; by EEF1AKMT3. Lysine 179 bears the N6-acetyllysine mark. Positions 194, 195, and 196 each coordinate GTP. A G5 region spans residues 194–196 (SGW). Position 224 is a phosphoserine (serine 224). Threonine 239 carries the phosphothreonine modification. 5-glutamyl glycerylphosphorylethanolamine is present on residues glutamate 301 and glutamate 374. Lysine 439 carries the post-translational modification N6-acetyllysine. The interval 444–463 (KSGGAGKVTKSAQKAQKAGK) is disordered.

Belongs to the TRAFAC class translation factor GTPase superfamily. Classic translation factor GTPase family. EF-Tu/EF-1A subfamily. In terms of assembly, homodimer; arranged in a 'head to tail' dimer configuration. Post-translationally, trimethylated at Lys-165 by EEF1AKMT3. Mono-, di-, and trimethylated at Lys-36 by EEF1AKMT4; trimethylated form is predominant. Methylation by EEF1AKMT4 contributes to the fine-tuning of translation rates for a subset of tRNAs. Trimethylated at the N-terminus and dimethylated at Lys-55 by METTL13.

The protein localises to the endoplasmic reticulum membrane. It catalyses the reaction GTP + H2O = GDP + phosphate + H(+). Translation elongation factor that catalyzes the GTP-dependent binding of aminoacyl-tRNA (aa-tRNA) to the A-site of ribosomes during the elongation phase of protein synthesis. Base pairing between the mRNA codon and the aa-tRNA anticodon promotes GTP hydrolysis, releasing the aa-tRNA from EEF1A1 and allowing its accommodation into the ribosome. The growing protein chain is subsequently transferred from the P-site peptidyl tRNA to the A-site aa-tRNA, extending it by one amino acid through ribosome-catalyzed peptide bond formation. The chain is Elongation factor 1-alpha 2 (EEF1A2) from Bos taurus (Bovine).